The following is a 21-amino-acid chain: Outer membrane protein A (21 aa).

The chain crosses the membrane as a beta stranded span at residues 6-16 (TWYTGAKLGWS).

This sequence belongs to the outer membrane OOP (TC 1.B.6) superfamily. OmpA family. Monomer and homodimer.

Its subcellular location is the cell outer membrane. With TolR probably plays a role in maintaining the position of the peptidoglycan cell wall in the periplasm. Acts as a porin with low permeability that allows slow penetration of small solutes; an internal gate slows down solute passage. This Actinobacillus lignieresii protein is Outer membrane protein A.